The sequence spans 146 residues: D-aminoacyl-tRNA deacylase (146 aa).

A Gly-cisPro motif, important for rejection of L-amino acids motif is present at residues 137 to 138; sequence GP.

The protein belongs to the DTD family. In terms of assembly, homodimer.

It is found in the cytoplasm. The enzyme catalyses glycyl-tRNA(Ala) + H2O = tRNA(Ala) + glycine + H(+). It carries out the reaction a D-aminoacyl-tRNA + H2O = a tRNA + a D-alpha-amino acid + H(+). An aminoacyl-tRNA editing enzyme that deacylates mischarged D-aminoacyl-tRNAs. Also deacylates mischarged glycyl-tRNA(Ala), protecting cells against glycine mischarging by AlaRS. Acts via tRNA-based rather than protein-based catalysis; rejects L-amino acids rather than detecting D-amino acids in the active site. By recycling D-aminoacyl-tRNA to D-amino acids and free tRNA molecules, this enzyme counteracts the toxicity associated with the formation of D-aminoacyl-tRNA entities in vivo and helps enforce protein L-homochirality. The polypeptide is D-aminoacyl-tRNA deacylase (Shouchella clausii (strain KSM-K16) (Alkalihalobacillus clausii)).